The primary structure comprises 159 residues: Testis-specific XK-related protein, Y-linked (159 aa).

3 helical membrane passes run 1-21 (MFIF…VGAI), 45-65 (IYLM…LAFF), and 72-92 (GSLH…WLEF).

It belongs to the XK family. As to expression, testis specific.

Its subcellular location is the membrane. The polypeptide is Testis-specific XK-related protein, Y-linked (XKRY) (Homo sapiens (Human)).